Here is a 577-residue protein sequence, read N- to C-terminus: Pentatricopeptide repeat-containing protein At1g06143 (577 aa).

PPR repeat units follow at residues 59–89 (DCRL…MQEP), 90–124 (NVFV…SVSP), 125–155 (SSYT…KFGF), 158–192 (HVKI…DDIA), 193–219 (WTTM…MSEK), 220–250 (NEAT…MPVK), 251–285 (DIIS…GIIP), 286–320 (DEVT…GFVL), 321–351 (DVYI…LPKK), 352–386 (NLFC…SVKP), 387–417 (NAVT…MIDD), and 423–453 (NVEH…MEFE). Residues 458–534 (IWGALLDGCR…CPGTSSIRID (77 aa)) form a type E motif region. Positions 535–565 (KRDHLFAAADKSHSASDEVCLLLDEIYDQMG) are type E(+) motif.

Belongs to the PPR family. PCMP-E subfamily.

This Arabidopsis thaliana (Mouse-ear cress) protein is Pentatricopeptide repeat-containing protein At1g06143 (EMB1444).